Here is a 318-residue protein sequence, read N- to C-terminus: Protein IMPACT-A (318 aa).

The 103-residue stretch at 14-116 (DEVEALTSIY…EKIREFLLGK (103 aa)) folds into the RWD domain. A disordered region spans residues 296 to 318 (EESSKQTAKSKKVGKECKKKADH). The segment covering 308-318 (VGKECKKKADH) has biased composition (basic and acidic residues).

This sequence belongs to the IMPACT family. Interacts with GCN1; prevents the interaction of GCN1 with EIF2AK4/GCN2 and inhibits EIF2AK4/GCN2 kinase activity. Interaction with RPL39; this interaction occurs in a GCN1-independent manner. Associates with ribosomes; this interaction occurs in a GCN1-independent manner. Associates with actin; this interaction occurs in a GCN1-independent manner.

Its subcellular location is the cytoplasm. In terms of biological role, translational regulator that ensures constant high levels of translation upon a variety of stress conditions, such as amino acid starvation, UV-C irradiation, proteasome inhibitor treatment and glucose deprivation. Plays a role as a negative regulator of the EIF2AK4/GCN2 kinase activity; impairs GCN1-mediated EIF2AK4/GCN2 activation, and hence EIF2AK4/GCN2-mediated eIF-2-alpha phosphorylation and subsequent down-regulation of protein synthesis. Plays a role in differentiation of neuronal cells by stimulating neurite outgrowth. The polypeptide is Protein IMPACT-A (impact-A) (Xenopus tropicalis (Western clawed frog)).